Reading from the N-terminus, the 115-residue chain is Cytochrome c (115 aa).

4 residues coordinate heme c: cysteine 26, cysteine 29, histidine 30, and methionine 91.

This sequence belongs to the cytochrome c family. Post-translationally, binds 1 heme c group covalently per subunit.

Its subcellular location is the mitochondrion intermembrane space. Its function is as follows. Electron carrier protein. The oxidized form of the cytochrome c heme group can accept an electron from the heme group of the cytochrome c1 subunit of cytochrome reductase. Cytochrome c then transfers this electron to the cytochrome oxidase complex, the final protein carrier in the mitochondrial electron-transport chain. This chain is Cytochrome c, found in Theileria annulata.